The primary structure comprises 708 residues: Glycine--tRNA ligase beta subunit (708 aa).

Belongs to the class-II aminoacyl-tRNA synthetase family. In terms of assembly, tetramer of two alpha and two beta subunits.

It localises to the cytoplasm. It catalyses the reaction tRNA(Gly) + glycine + ATP = glycyl-tRNA(Gly) + AMP + diphosphate. The protein is Glycine--tRNA ligase beta subunit of Methylobacillus flagellatus (strain ATCC 51484 / DSM 6875 / VKM B-1610 / KT).